We begin with the raw amino-acid sequence, 476 residues long: MYTDADRSREVVPEKDGHDKKWRDEFGRDYGRIIHSASFRRQQGKTQVFPSRESDFFRNRLTHSLEVAQIAQGIAERINYDYDKDLGGKIDPRLCATAGLVHDIGHPPFGHNGESALDKAMQRYGGFEGNAQTLRILTRLEKKLRYAEPLAGDDRAGLNLCHRTIAATLKYDNEIPAIRKAADGFVKGYYGSEKIIVDRVKASVLNGYVLGAEEKFCTIECSIMDLADDIAYSVYDLEDCFKVGFLSPAEMLASDDALLSAVAKRASKPMKRTVTINEIQAVFMEIFSEIIEQPAEDADSPLDGIVIEDDIAQQAKRDESLLTFAEAYRTSKVMSEDGYKRTEFSSELVHQFISGVELKAHKECPSLSQIYLPEKLMLRKEVLKQYTFVAAIYAPRVKLGEYRGYDLVTDIFKALMGDRGDLLMPADVRGRIRKAPNVSVKAREVCDFVAGMTDRYAMEFWARLNSDAAESMFKPI.

Positions 1 to 20 (MYTDADRSREVVPEKDGHDK) are disordered. The HD domain occupies 60–233 (RLTHSLEVAQ…MDLADDIAYS (174 aa)).

This sequence belongs to the dGTPase family. Type 2 subfamily.

This chain is Deoxyguanosinetriphosphate triphosphohydrolase-like protein 2, found in Mesorhizobium japonicum (strain LMG 29417 / CECT 9101 / MAFF 303099) (Mesorhizobium loti (strain MAFF 303099)).